Here is a 397-residue protein sequence, read N- to C-terminus: Metallophosphoesterase 1 (397 aa).

A helical membrane pass occupies residues 27–47; it reads IAVVFAVLLFCEFLIYYLAIF. A divalent metal cation is bound by residues aspartate 77, aspartate 119, asparagine 157, histidine 250, histidine 304, and histidine 306. Residues 357–377 traverse the membrane as a helical segment; that stretch reads VVLIIYCGMVGFLVVLTLTHF. Residues 393–397 carry the Di-lysine motif motif; it reads KRKTR.

This sequence belongs to the metallophosphoesterase superfamily. MPPE1 family. In terms of assembly, interacts with GPI-anchor proteins (via the GPI portion). Interacts with TMED10. Mn(2+) serves as cofactor.

It localises to the endoplasmic reticulum-Golgi intermediate compartment membrane. Functionally, metallophosphoesterase that catalyzes the removal of a side-chain ethanolamine-phosphate (EtNP) from the second mannose of the GPI-anchor protein intermediate. Participates in the glycan remodeling steps of GPI-anchor maturation to allow an efficient transport of GPI-anchor proteins from the endoplasmic reticulum to the Golgi. The sequence is that of Metallophosphoesterase 1 from Pongo abelii (Sumatran orangutan).